The primary structure comprises 145 residues: Partner of bursicon (145 aa).

Residues 1–28 (MKENFSIMFIHSIFLILIIFIYSNETIA) form the signal peptide. 5 cysteine pairs are disulfide-bonded: Cys36–Cys94, Cys60–Cys109, Cys69–Cys135, Cys73–Cys137, and Cys91–Cys140. In terms of domain architecture, CTCK spans 36–131 (CETLQSEVHI…NGVMEIKIRE (96 aa)).

In terms of assembly, heterodimer of burs and pburs.

The protein resides in the secreted. Functionally, final heterodimeric neurohormone released at the end of the molting cycle, involved in the sclerotization (tanning) of the insect cuticle, melanization and wing spreading. The sequence is that of Partner of bursicon (pburs) from Apis mellifera (Honeybee).